The chain runs to 2890 residues: Bifunctional DNA-directed RNA polymerase subunit beta-beta' (2890 aa).

Positions 1-1377 are DNA-directed RNA polymerase subunit beta; sequence MSKKIPLKNR…DINIFGDDVD (1377 aa). The tract at residues 1384 to 2890 is DNA-directed RNA polymerase subunit beta'; that stretch reads PIVIKEDDRP…LRTLEDDPKF (1507 aa). Zn(2+) is bound by residues Cys-1449, Cys-1451, Cys-1465, and Cys-1468. Mg(2+) is bound by residues Asp-1849, Asp-1851, and Asp-1853. Cys-2179, Cys-2253, Cys-2260, and Cys-2263 together coordinate Zn(2+).

It in the N-terminal section; belongs to the RNA polymerase beta chain family. This sequence in the C-terminal section; belongs to the RNA polymerase beta' chain family. The RNAP catalytic core consists of 2 alpha, 1 beta/beta' and 1 omega subunit. When a sigma factor is associated with the core the holoenzyme is formed, which can initiate transcription. Mg(2+) serves as cofactor. Zn(2+) is required as a cofactor.

The enzyme catalyses RNA(n) + a ribonucleoside 5'-triphosphate = RNA(n+1) + diphosphate. DNA-dependent RNA polymerase catalyzes the transcription of DNA into RNA using the four ribonucleoside triphosphates as substrates. This is Bifunctional DNA-directed RNA polymerase subunit beta-beta' (rpoBC) from Helicobacter pylori (strain Shi470).